We begin with the raw amino-acid sequence, 318 residues long: WRKY transcription factor 28 (318 aa).

Composition is skewed to polar residues over residues 74–84 (SSEVFNSSIDQ) and 106–115 (RVSPSNSSSS). Residues 74–158 (SSEVFNSSID…KTEVKKQREP (85 aa)) form a disordered region. Composition is skewed to basic and acidic residues over residues 116–126 (EADHPGEDSGK) and 148–158 (KKTEVKKQREP). Positions 166–231 (SEVDHLEDGY…YEGQHNHPIP (66 aa)) form a DNA-binding region, WRKY.

Belongs to the WRKY group II-c family.

The protein localises to the nucleus. Its function is as follows. Transcription factor. Interacts specifically with the W box (5'-(T)TGAC[CT]-3'), a frequently occurring elicitor-responsive cis-acting element. The protein is WRKY transcription factor 28 (WRKY28) of Arabidopsis thaliana (Mouse-ear cress).